Reading from the N-terminus, the 250-residue chain is PF03932 family protein CutC (250 aa).

The protein belongs to the CutC family.

It localises to the cytoplasm. The sequence is that of PF03932 family protein CutC from Vibrio vulnificus (strain CMCP6).